A 25-amino-acid polypeptide reads, in one-letter code: Xenoposin precursor fragment BM1 (25 aa).

In terms of tissue distribution, expressed by the skin glands.

It is found in the secreted. Functionally, antimicrobial peptide. The protein is Xenoposin precursor fragment BM1 of Xenopus boumbaensis (Mawa clawed frog).